A 508-amino-acid polypeptide reads, in one-letter code: Cobalamin biosynthesis protein CobIJ (508 aa).

Residues 1 to 243 (MSARGTLWGV…AMLPGGRRRA (243 aa)) are precorrin-2 C20-methyltransferase. The tract at residues 244-508 (LLTGTVAVVG…TATKSSRHSD (265 aa)) is precorrin-3 methylase. The interval 489 to 508 (PRRYPEAGRATATKSSRHSD) is disordered.

This sequence belongs to the precorrin methyltransferase family.

The catalysed reaction is precorrin-2 + S-adenosyl-L-methionine = precorrin-3A + S-adenosyl-L-homocysteine + H(+). The enzyme catalyses precorrin-3B + S-adenosyl-L-methionine = precorrin-4 + S-adenosyl-L-homocysteine + 3 H(+). It participates in cofactor biosynthesis; adenosylcobalamin biosynthesis; cob(II)yrinate a,c-diamide from precorrin-2 (aerobic route): step 1/10. Its pathway is cofactor biosynthesis; adenosylcobalamin biosynthesis; cob(II)yrinate a,c-diamide from precorrin-2 (aerobic route): step 3/10. Functionally, methylates precorrin-2 at the C-20 position to produce precorrin-3A. This chain is Cobalamin biosynthesis protein CobIJ (cobIJ), found in Mycobacterium bovis (strain ATCC BAA-935 / AF2122/97).